The following is a 313-amino-acid chain: E3 ubiquitin-protein ligase RNF126 (313 aa).

At Ala-2 the chain carries N-acetylalanine. Ser-5 carries the post-translational modification Phosphoserine. Residues Ser-5–Ala-101 are required for interaction with BAG6. Zn(2+) contacts are provided by Cys-13, Cys-16, Cys-29, and Cys-32. The segment at Cys-13–Cys-32 adopts a C4-type zinc-finger fold. Disordered stretches follow at residues Glu-42–Gln-64 and Thr-96–Pro-128. Positions Ala-47–Gln-64 are enriched in polar residues. Positions Asp-104 to Gln-117 are enriched in basic and acidic residues. Over residues His-118–Pro-128 the composition is skewed to basic residues. The sufficient for interaction with AICDA stretch occupies residues Thr-203–Asn-306. An RING-type zinc finger spans residues Cys-232–Arg-273. The tract at residues Asn-280 to Ser-313 is disordered. Residues Ser-292 to Ser-313 are compositionally biased toward low complexity.

In terms of assembly, interacts with CCDC50, EGFR, FLT3 and SCAMP3. Interacts with BAG6 (via ubiquitin-like domain); required for BAG6-dependent ubiquitination of proteins mislocalized to the cytosol. Interacts with CDKN1A. Interacts with AICDA. Post-translationally, ubiquitinated. May undergo autoubiquitination.

The protein resides in the cytoplasm. Its subcellular location is the nucleus. The enzyme catalyses S-ubiquitinyl-[E2 ubiquitin-conjugating enzyme]-L-cysteine + [acceptor protein]-L-lysine = [E2 ubiquitin-conjugating enzyme]-L-cysteine + N(6)-ubiquitinyl-[acceptor protein]-L-lysine.. It functions in the pathway protein modification; protein ubiquitination. Its function is as follows. E3 ubiquitin-protein ligase that mediates ubiquitination oF target proteins. Depending on the associated E2 ligase, mediates 'Lys-27'-, 'Lys-29'-, 'Lys-48'- and/or 'Lys-63'-linked polyubiquitination of substrates. Part of a BAG6-dependent quality control process ensuring that proteins of the secretory pathway that are mislocalized to the cytosol are degraded by the proteasome. Probably acts by providing the ubiquitin ligase activity associated with the BAG6 complex and be responsible for ubiquitination of the hydrophobic mislocalized proteins and their targeting to the proteasome. May also play a role in the endosomal recycling of IGF2R, the cation-independent mannose-6-phosphate receptor. May play a role in the endosomal sorting and degradation of several membrane receptors including EGFR, FLT3, MET and CXCR4, by mediating their ubiquitination. By ubiquitinating CDKN1A/p21 and targeting it for degradation, may also promote cell proliferation. May monoubiquitinate AICDA. Acts as a regulator of DNA repair by mediating 'Lys-27'- and 'Lys-29'-linked polyubiquitination of MRE11, thereby promoting the exonuclease activity of MRE11. The polypeptide is E3 ubiquitin-protein ligase RNF126 (Bos taurus (Bovine)).